The primary structure comprises 556 residues: Phospholipase D (556 aa).

A signal peptide spans 1–47; sequence MTSDQRPARLPTHKGKLLAPHRLHRLIPVSVALTTVCAALPSSTAYA. The PLD phosphodiesterase 1 domain occupies 210–237; that stretch reads SLSWNHSKLLVVDGKTAITGGINGWKDD. Residues 326–360 form a disordered region; that stretch reads SDPSSGYHPDLPTAPDTKCTVGLHDNTNADRDYDT. A PLD phosphodiesterase 2 domain is found at 484–511; it reads KPYALHHKLVSVDDSAFYIGSKNLYPAW.

Belongs to the phospholipase D family. Post-translationally, probably has at least 1 disulfide bond.

Its subcellular location is the secreted. The catalysed reaction is a 1,2-diacyl-sn-glycero-3-phosphocholine + H2O = a 1,2-diacyl-sn-glycero-3-phosphate + choline + H(+). Its activity is regulated as follows. Inhibited by mercaptoethanol and dithiothreitol. In terms of biological role, a reversible phospholipase active on phosphatidylcholine (PC) and phosphatidylethanolamine. Lysophosphatidylcholine and egg sphingomyelin are hydrolyzed about 50 times and 100 times more slowly than PC, respectively. During the transphosphatidylation reaction straight-chain hydroxy compounds, such as triethyleneglycol and triethyleneglycol monomethyl ether, were phosphatidylated in good yield, as were monosaccharides. Disaccharides and sugar alcohol reacted slowly, while N-acetyl-D-galactosamine, D-galactosamine and D-galacturonic acid were not phosphatidylated. The sequence is that of Phospholipase D from Streptomyces antibioticus.